The following is a 147-amino-acid chain: Hemoglobin subunit epsilon-1 (147 aa).

One can recognise a Globin domain in the interval 3-147; sequence HFTAEEKAAI…VATALAHKYH (145 aa). Residues histidine 64 and histidine 93 each contribute to the heme b site.

The protein belongs to the globin family. Heterotetramer of two epsilon chains and two alpha chains. Red blood cells.

Functionally, beta-type chain found in early embryos. In Capra hircus (Goat), this protein is Hemoglobin subunit epsilon-1 (HBE1).